A 119-amino-acid chain; its full sequence is Endocuticle structural glycoprotein SgAbd-3 (119 aa).

Pyrrolidone carboxylic acid is present on Gln-1. The region spanning 24 to 98 is the Chitin-binding type R&amp;R domain; sequence DGSYRYSFET…PQGAHLPTPP (75 aa). Residues 33 to 55 are disordered; sequence TSDGQRASQEGALKQVSAPGPDG. A glycan (O-linked (HexNAc...) threonine) is linked at Thr-96.

Component of the abdominal endocuticle. The sequence is that of Endocuticle structural glycoprotein SgAbd-3 from Schistocerca gregaria (Desert locust).